Reading from the N-terminus, the 403-residue chain is Glucose/galactose-binding lipoprotein (403 aa).

Positions 1–25 (MKENSCTACSRRLALFVGAAVLVVG) are cleaved as a signal peptide. Residue C26 is the site of N-palmitoyl cysteine attachment. A lipid anchor (S-diacylglycerol cysteine) is attached at C26.

The protein belongs to the bacterial solute-binding protein 2 family.

The protein resides in the cell membrane. May be involved in the transport of sugars. May have a role in chemotaxis. This chain is Glucose/galactose-binding lipoprotein (mglB), found in Treponema pallidum (strain Nichols).